The following is a 424-amino-acid chain: Serine hydroxymethyltransferase 2 (424 aa).

Residues Leu125 and 129–131 (GHL) contribute to the (6S)-5,6,7,8-tetrahydrofolate site. An N6-(pyridoxal phosphate)lysine modification is found at Lys234. Residue Glu250 participates in (6S)-5,6,7,8-tetrahydrofolate binding.

It belongs to the SHMT family. Homodimer. Pyridoxal 5'-phosphate serves as cofactor.

It localises to the cytoplasm. The catalysed reaction is (6R)-5,10-methylene-5,6,7,8-tetrahydrofolate + glycine + H2O = (6S)-5,6,7,8-tetrahydrofolate + L-serine. Its pathway is one-carbon metabolism; tetrahydrofolate interconversion. The protein operates within amino-acid biosynthesis; glycine biosynthesis; glycine from L-serine: step 1/1. Its function is as follows. Catalyzes the reversible interconversion of serine and glycine with tetrahydrofolate (THF) serving as the one-carbon carrier. This reaction serves as the major source of one-carbon groups required for the biosynthesis of purines, thymidylate, methionine, and other important biomolecules. Also exhibits THF-independent aldolase activity toward beta-hydroxyamino acids, producing glycine and aldehydes, via a retro-aldol mechanism. The polypeptide is Serine hydroxymethyltransferase 2 (Burkholderia pseudomallei (strain 1710b)).